Here is a 248-residue protein sequence, read N- to C-terminus: D-xylose 1-dehydrogenase (248 aa).

Positions 42, 68, 91, 156, 160, 189, and 191 each coordinate NAD(+). Catalysis depends on Y156, which acts as the Proton acceptor.

It belongs to the short-chain dehydrogenases/reductases (SDR) family.

The enzyme catalyses D-xylose + NAD(+) = D-xylono-1,5-lactone + NADH + H(+). Its function is as follows. Involved in the degradation of D-xylose. Catalyzes the initial reaction in the xylose utilization pathway by oxydizing D-xylose into D-xylonolactone. Shows some activity with L-arabinose and D-lyxose, but D-xylose is clearly the best substrate. Has no activity with D-ribose, D-glucose, D-galactose or D-mannose. This Caulobacter vibrioides (strain ATCC 19089 / CIP 103742 / CB 15) (Caulobacter crescentus) protein is D-xylose 1-dehydrogenase.